The chain runs to 251 residues: RNA polymerase sigma factor SigI (251 aa).

A Polymerase core binding motif is present at residues 61 to 74 (DEFSIGLIAFNEAI). The segment at residues 206–225 (VKQLEQLVSVSRKTIERNRK) is a DNA-binding region (H-T-H motif).

This sequence belongs to the sigma-70 factor family. SigI subfamily. In terms of assembly, interacts with RsgI.

The protein resides in the cytoplasm. With respect to regulation, negatively regulated by the anti-sigma-I factor RsgI. Upon exposure to heat, SigI is released from RsgI and activated. Transient heat activation of SigI may depend upon DnaK chaperone. Functionally, sigma factors are initiation factors that promote the attachment of RNA polymerase to specific initiation sites and are then released. This sigma factor is involved in regulation of cell wall metabolism in response to heat stress. Acts by regulating the expression of genes such as bcrC, mreBH and lytE. Also plays a role in survival at low temperatures. The protein is RNA polymerase sigma factor SigI of Bacillus subtilis (strain 168).